A 118-amino-acid chain; its full sequence is T cell receptor gamma variable 4 (118 aa).

Positions 1 to 17 (MQWALAVLLAFLSPASQ) are cleaved as a signal peptide. The region spanning 18 to 118 (KSSNLEGRTK…GVYYCATWDG (101 aa)) is the Ig-like domain. Cysteines 41 and 113 form a disulfide. N-linked (GlcNAc...) asparagine glycosylation is present at Asn-106.

Gamma-delta TR is a heterodimer composed of a gamma and delta chain; disulfide-linked. The gamma-delta TR is associated with the transmembrane signaling CD3 coreceptor proteins following the stoichiometry: a single gamma-delta TR heterodimer associates with one CD3D-CD3E heterodimer, one CD3G-CD3E heterodimer and one CD247 homodimer forming a stable octameric structure. Upon activation, gamma-delta TR complex associates with FCER1G to initiate intracellular signaling.

It is found in the cell membrane. Its function is as follows. V region of the variable domain of T cell receptor (TR) gamma chain that participates in the antigen recognition. Gamma-delta TRs recognize a variety of self and foreign non-peptide antigens frequently expressed at the epithelial boundaries between the host and external environment, including endogenous lipids presented by MH-like protein CD1D and phosphoantigens presented by butyrophilin-like molecule BTN3A1. Upon antigen recognition induces rapid, innate-like immune responses involved in pathogen clearance and tissue repair. Binding of gamma-delta TR complex to antigen triggers phosphorylation of immunoreceptor tyrosine-based activation motifs (ITAMs) in the CD3 chains by the LCK and FYN kinases, allowing the recruitment, phosphorylation, and activation of ZAP70 that facilitates phosphorylation of the scaffolding proteins LCP2 and LAT. This lead to the formation of a supramolecular signalosome that recruits the phospholipase PLCG1, resulting in calcium mobilization and ERK activation, ultimately leading to T cell expansion and differentiation into effector cells. Gamma-delta TRs are produced through somatic rearrangement of a limited repertoire of variable (V), diversity (D), and joining (J) genes. The potential diversity of gamma-delta TRs is conferred by the unique ability to rearrange (D) genes in tandem and to utilize all three reading frames. The combinatorial diversity is considerably increased by the sequence exonuclease trimming and random nucleotide (N) region additions which occur during the V-(D)-J rearrangements. This is T cell receptor gamma variable 4 from Homo sapiens (Human).